The following is a 237-amino-acid chain: Ribonuclease PH (237 aa).

Phosphate-binding positions include R86 and 124 to 126; that span reads GTR.

This sequence belongs to the RNase PH family. In terms of assembly, homohexameric ring arranged as a trimer of dimers.

The enzyme catalyses tRNA(n+1) + phosphate = tRNA(n) + a ribonucleoside 5'-diphosphate. Its function is as follows. Phosphorolytic 3'-5' exoribonuclease that plays an important role in tRNA 3'-end maturation. Removes nucleotide residues following the 3'-CCA terminus of tRNAs; can also add nucleotides to the ends of RNA molecules by using nucleoside diphosphates as substrates, but this may not be physiologically important. Probably plays a role in initiation of 16S rRNA degradation (leading to ribosome degradation) during starvation. The chain is Ribonuclease PH from Bradyrhizobium sp. (strain BTAi1 / ATCC BAA-1182).